The following is a 103-amino-acid chain: Large ribosomal subunit protein bL21 (103 aa).

This sequence belongs to the bacterial ribosomal protein bL21 family. As to quaternary structure, part of the 50S ribosomal subunit. Contacts protein L20.

This protein binds to 23S rRNA in the presence of protein L20. This chain is Large ribosomal subunit protein bL21, found in Leptothrix cholodnii (strain ATCC 51168 / LMG 8142 / SP-6) (Leptothrix discophora (strain SP-6)).